The primary structure comprises 59 residues: Thrombostatin (59 aa).

4 disulfides stabilise this stretch: cysteine 3–cysteine 22, cysteine 17–cysteine 37, cysteine 39–cysteine 51, and cysteine 52–cysteine 57. A Cell attachment site motif is present at residues 43-45; sequence RGD.

This sequence belongs to the three-finger toxin family. Short-chain subfamily. Antiplatelet toxin sub-subfamily. Expressed by the venom gland.

It localises to the secreted. Its function is as follows. Inhibits ADP-induced platelet aggregation and inhibits the binding of purified platelet fibrinogen receptor alpha-IIb/beta-3 (ITGA2B/ITGB3) to immobilized fibrinogen. The protein is Thrombostatin of Dendroaspis angusticeps (Eastern green mamba).